The sequence spans 160 residues: MSYNCCSRNFSSRSFGGYLYYPGSYPSSLVYSTALCSPSTCQLRSSLYRDCQKTCWEPASCQKSCYRPRTSILCCPCQTTCSGSLGFRSSSCRSQGYGSRCCYSLGNGSSGFRFLKYGGCGFPSLSYGSRFCYPNYLASGAWQSSCYRPICGSRFYQFTC.

4 tandem repeats follow at residues 41–50 (CQLRSSLYRD), 51–60 (CQKTCWEPAS), 61–70 (CQKSCYRPRT), and 77–86 (CQTTCSGSLG). Positions 41-86 (CQLRSSLYRDCQKTCWEPASCQKSCYRPRTSILCCPCQTTCSGSLG) are 4 X 10 AA approximate repeats.

This sequence belongs to the PMG family. Interacts with hair keratins.

In the hair cortex, hair keratin intermediate filaments are embedded in an interfilamentous matrix, consisting of hair keratin-associated proteins (KRTAP), which are essential for the formation of a rigid and resistant hair shaft through their extensive disulfide bond cross-linking with abundant cysteine residues of hair keratins. The matrix proteins include the high-sulfur and high-glycine-tyrosine keratins. The protein is Keratin-associated protein 13-4 (KRTAP13-4) of Homo sapiens (Human).